A 558-amino-acid polypeptide reads, in one-letter code: Ribonuclease J (558 aa).

Positions 81, 83, 85, 86, 148, and 170 each coordinate Zn(2+). 371–375 (HVSGH) serves as a coordination point for substrate. His-397 is a Zn(2+) binding site.

This sequence belongs to the metallo-beta-lactamase superfamily. RNA-metabolizing metallo-beta-lactamase-like family. Bacterial RNase J subfamily. Homodimer. It depends on Zn(2+) as a cofactor.

It is found in the cytoplasm. An RNase that has endonuclease and 5'-3' exonuclease activity. The 5'-exonuclease activity acts on 5'-monophosphate but not 5'-triphosphate ends. Endonuclease activity can cleave within 4 nucleotides of the 5'-end of a triphosphorylated RNA. Plays the major role in pre-23S rRNA maturation, and a minor role in processing of pre-5S and pre-16S rRNA. This Mycolicibacterium smegmatis (strain ATCC 700084 / mc(2)155) (Mycobacterium smegmatis) protein is Ribonuclease J.